A 57-amino-acid polypeptide reads, in one-letter code: DNA-directed RNA polymerase subunit Rpo6 (57 aa).

This sequence belongs to the archaeal Rpo6/eukaryotic RPB6 RNA polymerase subunit family. As to quaternary structure, part of the RNA polymerase complex.

The protein localises to the cytoplasm. The catalysed reaction is RNA(n) + a ribonucleoside 5'-triphosphate = RNA(n+1) + diphosphate. DNA-dependent RNA polymerase (RNAP) catalyzes the transcription of DNA into RNA using the four ribonucleoside triphosphates as substrates. The chain is DNA-directed RNA polymerase subunit Rpo6 from Pyrococcus furiosus (strain ATCC 43587 / DSM 3638 / JCM 8422 / Vc1).